Reading from the N-terminus, the 348-residue chain is Fasciculation and elongation protein zeta-2 (348 aa).

The tract at residues 11–40 (YEFQEPAGSVQEQENCNASPEAGAGAHAGG) is disordered. Residues Ser130, Ser171, and Ser190 each carry the phosphoserine modification. Residues 206–280 (ERVKRLSVSE…TAKKKKKLKS (75 aa)) adopt a coiled-coil conformation. Residues 265–296 (QKEHKETAKKKKKLKSGSSQNGRSERSHMPGT) form a disordered region.

Belongs to the zygin family. In terms of assembly, homodimer; disulfide-linked. May form heterodimers with FEZ1. Interacts with synaptotagmin.

In terms of biological role, involved in axonal outgrowth and fasciculation. In Mus musculus (Mouse), this protein is Fasciculation and elongation protein zeta-2 (Fez2).